The following is a 374-amino-acid chain: UPF0754 membrane protein SA1664 (374 aa).

2 helical membrane passes run leucine 4–isoleucine 24 and serine 354–valine 374.

Belongs to the UPF0754 family.

It is found in the cell membrane. This chain is UPF0754 membrane protein SA1664, found in Staphylococcus aureus (strain N315).